The following is a 990-amino-acid chain: Insulin-degrading enzyme (990 aa).

H81 lines the Zn(2+) pocket. E84 acts as the Proton acceptor in catalysis. Zn(2+)-binding residues include H85 and E162.

This sequence belongs to the peptidase M16 family. The cofactor is Zn(2+).

The catalysed reaction is Degradation of insulin, glucagon and other polypeptides. No action on proteins.. Functionally, can cleave insulin and TGF-alpha. This chain is Insulin-degrading enzyme (Ide), found in Drosophila melanogaster (Fruit fly).